Here is a 51-residue protein sequence, read N- to C-terminus: Insulin (51 aa).

Cystine bridges form between C7–C37, C19–C50, and C36–C41.

It belongs to the insulin family. As to quaternary structure, heterodimer of a B chain and an A chain linked by two disulfide bonds.

The protein localises to the secreted. Functionally, insulin decreases blood glucose concentration. It increases cell permeability to monosaccharides, amino acids and fatty acids. It accelerates glycolysis, the pentose phosphate cycle, and glycogen synthesis in liver. The chain is Insulin (INS) from Alligator mississippiensis (American alligator).